The following is a 451-amino-acid chain: UDP-N-acetylmuramoylalanine--D-glutamate ligase (451 aa).

An ATP-binding site is contributed by 118 to 124 (GTKGKST).

Belongs to the MurCDEF family.

The protein resides in the cytoplasm. It carries out the reaction UDP-N-acetyl-alpha-D-muramoyl-L-alanine + D-glutamate + ATP = UDP-N-acetyl-alpha-D-muramoyl-L-alanyl-D-glutamate + ADP + phosphate + H(+). It functions in the pathway cell wall biogenesis; peptidoglycan biosynthesis. Its function is as follows. Cell wall formation. Catalyzes the addition of glutamate to the nucleotide precursor UDP-N-acetylmuramoyl-L-alanine (UMA). This is UDP-N-acetylmuramoylalanine--D-glutamate ligase from Borreliella afzelii (strain PKo) (Borrelia afzelii).